The chain runs to 242 residues: DNA repair protein RecO (242 aa).

Belongs to the RecO family.

Involved in DNA repair and RecF pathway recombination. This is DNA repair protein RecO from Nitrosospira multiformis (strain ATCC 25196 / NCIMB 11849 / C 71).